The sequence spans 347 residues: Phosphoribosylformylglycinamidine cyclo-ligase (347 aa).

Belongs to the AIR synthase family.

It is found in the cytoplasm. The enzyme catalyses 2-formamido-N(1)-(5-O-phospho-beta-D-ribosyl)acetamidine + ATP = 5-amino-1-(5-phospho-beta-D-ribosyl)imidazole + ADP + phosphate + H(+). The protein operates within purine metabolism; IMP biosynthesis via de novo pathway; 5-amino-1-(5-phospho-D-ribosyl)imidazole from N(2)-formyl-N(1)-(5-phospho-D-ribosyl)glycinamide: step 2/2. This Prochlorococcus marinus (strain MIT 9312) protein is Phosphoribosylformylglycinamidine cyclo-ligase.